Consider the following 263-residue polypeptide: N-acyl homoserine lactonase AttM (263 aa).

7 residues coordinate Zn(2+): histidine 103, histidine 105, aspartate 107, histidine 108, histidine 180, aspartate 202, and histidine 247.

Belongs to the metallo-beta-lactamase superfamily. The cofactor is Zn(2+).

It carries out the reaction an N-acyl-L-homoserine lactone + H2O = an N-acyl-L-homoserine + H(+). In Rhizobium johnstonii (strain DSM 114642 / LMG 32736 / 3841) (Rhizobium leguminosarum bv. viciae), this protein is N-acyl homoserine lactonase AttM.